Here is a 1031-residue protein sequence, read N- to C-terminus: Error-prone DNA polymerase (1031 aa).

Belongs to the DNA polymerase type-C family. DnaE2 subfamily.

It is found in the cytoplasm. It catalyses the reaction DNA(n) + a 2'-deoxyribonucleoside 5'-triphosphate = DNA(n+1) + diphosphate. DNA polymerase involved in damage-induced mutagenesis and translesion synthesis (TLS). It is not the major replicative DNA polymerase. The polypeptide is Error-prone DNA polymerase (Pseudomonas savastanoi pv. phaseolicola (strain 1448A / Race 6) (Pseudomonas syringae pv. phaseolicola (strain 1448A / Race 6))).